We begin with the raw amino-acid sequence, 503 residues long: UDP-N-acetylmuramoylalanine--D-glutamate ligase (503 aa).

129 to 135 provides a ligand contact to ATP; that stretch reads GTNGKTT. Positions 284–305 are disordered; the sequence is DSEAEGEGKPRRRKADATAQEA.

Belongs to the MurCDEF family.

It is found in the cytoplasm. It catalyses the reaction UDP-N-acetyl-alpha-D-muramoyl-L-alanine + D-glutamate + ATP = UDP-N-acetyl-alpha-D-muramoyl-L-alanyl-D-glutamate + ADP + phosphate + H(+). It participates in cell wall biogenesis; peptidoglycan biosynthesis. Its function is as follows. Cell wall formation. Catalyzes the addition of glutamate to the nucleotide precursor UDP-N-acetylmuramoyl-L-alanine (UMA). The sequence is that of UDP-N-acetylmuramoylalanine--D-glutamate ligase from Cupriavidus pinatubonensis (strain JMP 134 / LMG 1197) (Cupriavidus necator (strain JMP 134)).